We begin with the raw amino-acid sequence, 111 residues long: Nucleoid-associated protein PputW619_3586 (111 aa).

Residues Glu-87 to Phe-111 are disordered.

It belongs to the YbaB/EbfC family. In terms of assembly, homodimer.

It localises to the cytoplasm. The protein resides in the nucleoid. Functionally, binds to DNA and alters its conformation. May be involved in regulation of gene expression, nucleoid organization and DNA protection. This chain is Nucleoid-associated protein PputW619_3586, found in Pseudomonas putida (strain W619).